The primary structure comprises 466 residues: Cysteine--tRNA ligase (466 aa).

C29 contributes to the Zn(2+) binding site. The 'HIGH' region signature appears at 31–41; it reads ATVQAPPHIGH. Residues C211, H236, and E240 each contribute to the Zn(2+) site. Residues 267 to 271 carry the 'KMSKS' region motif; it reads KMSKS. K270 contacts ATP.

The protein belongs to the class-I aminoacyl-tRNA synthetase family. In terms of assembly, monomer. Zn(2+) is required as a cofactor.

Its subcellular location is the cytoplasm. The catalysed reaction is tRNA(Cys) + L-cysteine + ATP = L-cysteinyl-tRNA(Cys) + AMP + diphosphate. The chain is Cysteine--tRNA ligase from Thermobifida fusca (strain YX).